The sequence spans 470 residues: E3 ubiquitin-protein ligase TRAIP (470 aa).

The RING-type; atypical zinc-finger motif lies at 7-50; sequence CTICSDFFDHSRDVAAIHCGHTFHLQCLIQWFETAPSRTCPQCR. Residues 76–277 are a coiled coil; the sequence is AEFLKNELDS…RKKLMILQGT (202 aa). The interval 211–470 is interaction with CYLD; that stretch reads LKEARKATGE…QPKLDTFLCQ (260 aa). Positions 461–470 match the PIP-box motif; sequence QPKLDTFLCQ.

It belongs to the TRAIP family. Interacts (via PIP-box) with PCNA. Binds TRAF1, TRAF2, TRAF3, TRAF5 and TRAF6 is part of the receptor-TRAF signaling complex. May interact with CYLD; the C-terminus interacts with CYLD, however the interaction was not detected with the full-length protein. Interacts with POLK and POLN. Interacts with UIMC1. Autoubiquitinated. In terms of processing, sumoylated; sumoylation is required for nuclear localization. Sumoylation increases protein stability, possibly by preventing ubiquitination. In terms of tissue distribution, detected in testis and thymus, and at lower levels in spleen.

Its subcellular location is the nucleus. The protein localises to the nucleoplasm. It localises to the nucleolus. It is found in the chromosome. The protein resides in the cytoplasm. Its subcellular location is the perinuclear region. It carries out the reaction S-ubiquitinyl-[E2 ubiquitin-conjugating enzyme]-L-cysteine + [acceptor protein]-L-lysine = [E2 ubiquitin-conjugating enzyme]-L-cysteine + N(6)-ubiquitinyl-[acceptor protein]-L-lysine.. The protein operates within protein modification; protein ubiquitination. Functionally, E3 ubiquitin ligase required to protect genome stability in response to replication stress. Acts as a key regulator of interstrand cross-link repair, which takes place when both strands of duplex DNA are covalently tethered together, thereby blocking replication and transcription. During mitosis, controls the choice between the two pathways of replication-coupled interstrand-cross-link repair by mediating ubiquitination of MCM7 subunit of the CMG helicase complex. Short ubiquitin chains on MCM7 promote recruitment of DNA glycosylase NEIL3. If the interstrand cross-link cannot be cleaved by NEIL3, the ubiquitin chains continue to grow on MCM7, promoting the unloading of the CMG helicase complex by the VCP/p97 ATPase, enabling the Fanconi anemia DNA repair pathway. Only catalyzes ubiquitination of MCM7 when forks converge. Also involved in the repair of covalent DNA-protein cross-links (DPCs) during DNA synthesis: promotes ubiquitination of DPCs, leading to their degradation by the proteasome. Has also been proposed to play a role in promoting translesion synthesis by mediating the assembly of 'Lys-63'-linked poly-ubiquitin chains on the Y-family polymerase POLN in order to facilitate bypass of DNA lesions and preserve genomic integrity. The function in translesion synthesis is however controversial. Acts as a regulator of the spindle assembly checkpoint. Also acts as a negative regulator of innate immune signaling by inhibiting activation of NF-kappa-B mediated by TNF. Negatively regulates TLR3/4- and RIG-I-mediated IRF3 activation and subsequent IFNB1 production and cellular antiviral response by promoting 'Lys-48'-linked polyubiquitination of TNK1 leading to its proteasomal degradation. This is E3 ubiquitin-protein ligase TRAIP from Mus musculus (Mouse).